A 111-amino-acid chain; its full sequence is uncharacterized protein (111 aa).

Residues 4–51 (LGQVKVLEEKVAKAVHLVQMLKEENAALRAEIDGRGKRITELEQLVLX) are a coiled coil.

This is an uncharacterized protein from Treponema pallidum (strain Nichols).